We begin with the raw amino-acid sequence, 242 residues long: Uridylate kinase (242 aa).

Residue 11 to 14 (KLSG) participates in ATP binding. The interval 19-24 (GEKGVG) is involved in allosteric activation by GTP. Gly-53 is a binding site for UMP. Positions 54 and 58 each coordinate ATP. Residues Asp-73 and 134-141 (IGSPYFST) each bind UMP. The ATP site is built by Asn-162, Tyr-168, and Asp-171.

The protein belongs to the UMP kinase family. As to quaternary structure, homohexamer.

The protein localises to the cytoplasm. The catalysed reaction is UMP + ATP = UDP + ADP. The protein operates within pyrimidine metabolism; CTP biosynthesis via de novo pathway; UDP from UMP (UMPK route): step 1/1. Allosterically activated by GTP. Inhibited by UTP. Catalyzes the reversible phosphorylation of UMP to UDP. This chain is Uridylate kinase, found in Streptococcus pyogenes serotype M1.